Here is a 194-residue protein sequence, read N- to C-terminus: Sigma factor AlgU negative regulatory protein (194 aa).

Residues 89 to 105 (LAVAASVTLAVLAGVRL) form a helical membrane-spanning segment.

The protein belongs to the RseA family.

Its subcellular location is the cell membrane. Negative regulator of the sigma factor AlgU. Plays a role in the differentiation of P.aeruginosa into the alginate-producing form. Inactivation of mucA causes a switch from the non-mucoid to mucoid state resulting in constitutive expression of alginate biosynthetic genes. The polypeptide is Sigma factor AlgU negative regulatory protein (mucA) (Pseudomonas aeruginosa (strain ATCC 15692 / DSM 22644 / CIP 104116 / JCM 14847 / LMG 12228 / 1C / PRS 101 / PAO1)).